A 464-amino-acid chain; its full sequence is ATP synthase subunit beta (464 aa).

G152–T159 serves as a coordination point for ATP.

Belongs to the ATPase alpha/beta chains family. As to quaternary structure, F-type ATPases have 2 components, CF(1) - the catalytic core - and CF(0) - the membrane proton channel. CF(1) has five subunits: alpha(3), beta(3), gamma(1), delta(1), epsilon(1). CF(0) has three main subunits: a(1), b(2) and c(9-12). The alpha and beta chains form an alternating ring which encloses part of the gamma chain. CF(1) is attached to CF(0) by a central stalk formed by the gamma and epsilon chains, while a peripheral stalk is formed by the delta and b chains.

The protein localises to the cell inner membrane. It carries out the reaction ATP + H2O + 4 H(+)(in) = ADP + phosphate + 5 H(+)(out). Functionally, produces ATP from ADP in the presence of a proton gradient across the membrane. The catalytic sites are hosted primarily by the beta subunits. In Aliarcobacter butzleri (strain RM4018) (Arcobacter butzleri), this protein is ATP synthase subunit beta.